Here is an 867-residue protein sequence, read N- to C-terminus: Protein translocase subunit SecA (867 aa).

ATP contacts are provided by residues Q85, 103 to 107, and D491; that span reads GEGKT.

It belongs to the SecA family. In terms of assembly, monomer and homodimer. Part of the essential Sec protein translocation apparatus which comprises SecA, SecYEG and auxiliary proteins SecDF. Other proteins may also be involved.

Its subcellular location is the cell membrane. The protein localises to the cytoplasm. The catalysed reaction is ATP + H2O + cellular proteinSide 1 = ADP + phosphate + cellular proteinSide 2.. Part of the Sec protein translocase complex. Interacts with the SecYEG preprotein conducting channel. Has a central role in coupling the hydrolysis of ATP to the transfer of proteins into and across the cell membrane, serving as an ATP-driven molecular motor driving the stepwise translocation of polypeptide chains across the membrane. This is Protein translocase subunit SecA from Mycoplasmopsis pulmonis (strain UAB CTIP) (Mycoplasma pulmonis).